The primary structure comprises 96 residues: Nucleoid-associated protein CF0672 (96 aa).

It belongs to the YbaB/EbfC family. As to quaternary structure, homodimer.

The protein resides in the cytoplasm. The protein localises to the nucleoid. Binds to DNA and alters its conformation. May be involved in regulation of gene expression, nucleoid organization and DNA protection. In Chlamydia felis (strain Fe/C-56) (Chlamydophila felis), this protein is Nucleoid-associated protein CF0672.